The sequence spans 548 residues: 5-epi-aristolochene synthase 1 (548 aa).

The Mg(2+) site is built by D301, D305, D444, T448, and E452. A DDXXD motif motif is present at residues 301-305 (DDTFD).

The protein belongs to the terpene synthase family. Monomer. Mg(2+) is required as a cofactor. In terms of tissue distribution, expressed in roots, but not in shoots.

Its subcellular location is the cytoplasm. It catalyses the reaction (2E,6E)-farnesyl diphosphate = (+)-5-epi-aristolochene + diphosphate. The protein operates within secondary metabolite biosynthesis; terpenoid biosynthesis. Catalyzes the cyclization of trans,trans-farnesyl diphosphate (FPP) to the bicyclic intermediate 5-epi-aristolochene, initial step in the conversion of FPP to the sesquiterpenoid antifungal phytoalexin capsidiol. Produces germacrene A as an enzyme-bound intermediate that is not released by the enzyme, but is further cyclized to produce the bicyclic 5-epi-aristolochene. In Nicotiana attenuata (Coyote tobacco), this protein is 5-epi-aristolochene synthase 1 (EAS).